Reading from the N-terminus, the 186-residue chain is Putative 3-methyladenine DNA glycosylase (186 aa).

Belongs to the DNA glycosylase MPG family.

The sequence is that of Putative 3-methyladenine DNA glycosylase from Borrelia garinii subsp. bavariensis (strain ATCC BAA-2496 / DSM 23469 / PBi) (Borreliella bavariensis).